The chain runs to 302 residues: Pathogenicity locus probable regulatory protein HrpS (302 aa).

The Sigma-54 factor interaction domain occupies 9-237; that stretch reads DDLDEERVPN…LKAAAKRHVL (229 aa). ATP contacts are provided by residues 37–44 and 99–108; these read GETGTGKD and AQGGTLYLDE. Positions 279-298 form a DNA-binding region, H-T-H motif; it reads IDAASLELDMPRRTLYRRIK.

Its function is as follows. Member of the two-component regulatory system HrpR/HrpS that regulates the activation of the sigma factor hrpL which itself induces the expression of hprD as well as other hrp loci which are involved in plant pathogenicity, hrmA and avr genes. Probably interacts with sigma-54. This chain is Pathogenicity locus probable regulatory protein HrpS (hrpS), found in Pseudomonas savastanoi pv. phaseolicola (Pseudomonas syringae pv. phaseolicola).